The sequence spans 101 residues: HssA/B-like protein 40 (101 aa).

The interval 1 to 26 (MTLFSSISSMSTSMSGSKSSISSFGS) is disordered.

Belongs to the hssA/B family.

The protein is HssA/B-like protein 40 (hssl40) of Dictyostelium discoideum (Social amoeba).